The sequence spans 347 residues: UDP-N-acetylenolpyruvoylglucosamine reductase (347 aa).

The region spanning 33–221 (AGGSAERIYL…SGAWFALPRD (189 aa)) is the FAD-binding PCMH-type domain. The active site involves arginine 180. Catalysis depends on serine 250, which acts as the Proton donor. Glutamate 320 is an active-site residue.

This sequence belongs to the MurB family. FAD is required as a cofactor.

The protein resides in the cytoplasm. The catalysed reaction is UDP-N-acetyl-alpha-D-muramate + NADP(+) = UDP-N-acetyl-3-O-(1-carboxyvinyl)-alpha-D-glucosamine + NADPH + H(+). It participates in cell wall biogenesis; peptidoglycan biosynthesis. Its function is as follows. Cell wall formation. This Nitrosospira multiformis (strain ATCC 25196 / NCIMB 11849 / C 71) protein is UDP-N-acetylenolpyruvoylglucosamine reductase.